We begin with the raw amino-acid sequence, 225 residues long: PKHD-type hydroxylase YbiX (225 aa).

Residues 78 to 177 (TLSTPLFNRY…RVASFMWIQS (100 aa)) enclose the Fe2OG dioxygenase domain. Positions 96, 98, and 158 each coordinate Fe cation. Residue Arg-168 coordinates 2-oxoglutarate.

Requires Fe(2+) as cofactor. It depends on L-ascorbate as a cofactor.

The protein is PKHD-type hydroxylase YbiX of Shigella dysenteriae serotype 1 (strain Sd197).